The sequence spans 736 residues: Dynamin-1-like protein (736 aa).

Met-1 bears the N-acetylmethionine mark. A Dynamin-type G domain is found at Ile-22 to Pro-302. Positions Gly-32–Ser-39 are G1 motif. Position 32-40 (Gly-32–Ser-40) interacts with GTP. Residues Val-58–Arg-60 are G2 motif. The segment at Asp-146–Gly-149 is G3 motif. Residues Thr-215 to Asp-218 are G4 motif. GTP is bound by residues Thr-215 to Asp-221 and Asn-246 to Gln-249. Positions Val-245 to Ser-248 are G5 motif. A middle domain region spans residues Tyr-344–Ile-489. Residues Asn-448–Glu-685 form an interaction with GSK3B region. The segment at Ala-502 to Asn-569 is b domain. The disordered stretch occupies residues Glu-523–Arg-590. At Ser-529 the chain carries Phosphoserine. Glycyl lysine isopeptide (Lys-Gly) (interchain with G-Cter in SUMO) cross-links involve residues Lys-532 and Lys-535. The span at Pro-537–Glu-554 shows a compositional bias: low complexity. Residue Ser-548 is modified to Phosphoserine. Basic and acidic residues predominate over residues Ala-555 to Lys-568. Residues Lys-558 and Lys-568 each participate in a glycyl lysine isopeptide (Lys-Gly) (interchain with G-Cter in SUMO) cross-link. O-linked (GlcNAc) threonine glycosylation is found at Thr-585 and Thr-586. A Glycyl lysine isopeptide (Lys-Gly) (interchain with G-Cter in SUMO) cross-link involves residue Lys-594. Lys-597 is modified (N6-acetyllysine; alternate). Lys-597 participates in a covalent cross-link: Glycyl lysine isopeptide (Lys-Gly) (interchain with G-Cter in SUMO); alternate. Lys-606 participates in a covalent cross-link: Glycyl lysine isopeptide (Lys-Gly) (interchain with G-Cter in SUMO). Ser-607 carries the post-translational modification Phosphoserine. Residue Lys-608 forms a Glycyl lysine isopeptide (Lys-Gly) (interchain with G-Cter in SUMO) linkage. At Ser-616 the chain carries Phosphoserine; by CDK1 and PINK1. Ser-637 is subject to Phosphoserine; by CAMK1 and PKA. The residue at position 644 (Cys-644) is an S-nitrosocysteine. In terms of domain architecture, GED spans Cys-644–Leu-735. The important for homodimerization stretch occupies residues Tyr-654–Lys-668.

Belongs to the TRAFAC class dynamin-like GTPase superfamily. Dynamin/Fzo/YdjA family. As to quaternary structure, homotetramer; dimerizes through the N-terminal GTP-middle region of one molecule binding to the GED domain of another DNM1L molecule. Oligomerizes in a GTP-dependent manner to form membrane-associated tubules with a spiral pattern. Interacts with GSK3B and MARCHF5. Interacts (via the GTPase and B domains) with UBE2I; the interaction promotes sumoylation of DNM1L, mainly in its B domain. Interacts with PPP3CA; the interaction dephosphorylates DNM1L and regulates its transition to mitochondria. Interacts with BCL2L1 isoform BCL-X(L) and CLTA; DNM1L and BCL2L1 isoform BCL-X(L) may form a complex in synaptic vesicles that also contains clathrin and MFF. Interacts with MFF; the interaction is inhibited by C11orf65/MFI. Interacts with FIS1; may form part of a larger protein complex at the endoplasmic reticulum-mitochondrial interface during mitochondrial fission. Interacts with CANX. Interacts with BCAP31. Interacts with MIEF2 and MIEF1; GTP-dependent, regulates GTP hydrolysis and DNM1L oligomerization. Interacts with PGAM5; this interaction leads to dephosphorylation at Ser-656 and activation of GTPase activity and eventually to mitochondria fragmentation. Interacts with RALBP1; during mitosis, recruits DNM1L to the mitochondrion and mediates its activation by the mitotic kinase cyclin B-CDK1. Interacts with FUNDC1; this interaction recruits DNM1L/DRP1 at ER-mitochondria contact sites. In terms of processing, phosphorylation/dephosphorylation events on two sites near the GED domain regulate mitochondrial fission. Phosphorylation on Ser-637 by CAMK1 and PKA inhibits the GTPase activity, leading to a defect in mitochondrial fission promoting mitochondrial elongation. Dephosphorylated on this site by PPP3CA which promotes mitochondrial fission. Phosphorylation on Ser-616 by CDK1 and PINK1 activates the GTPase activity and promotes mitochondrial fission. Phosphorylated in a circadian manner at Ser-637. Dephosphorylated by PGAM5. Post-translationally, sumoylated on various lysine residues within the B domain, probably by MUL1. Sumoylation positively regulates mitochondrial fission. Desumoylated by SENP5 during G2/M transition of mitosis. Appears to be linked to its catalytic activity. S-nitrosylation increases DNM1L dimerization, mitochondrial fission and causes neuronal damage. In terms of processing, ubiquitination by MARCHF5 affects mitochondrial morphology. Post-translationally, O-GlcNAcylation augments the level of the GTP-bound active form of DNM1L and induces translocation from the cytoplasm to mitochondria in cardiomyocytes. It also decreases phosphorylation at Ser-637. As to expression, ubiquitously expressed with highest levels found in skeletal muscles, heart, kidney and brain. Isoform 1 is brain-specific. Isoform 2 and isoform 3 are predominantly expressed in testis and skeletal muscles respectively. Isoform 4 is weakly expressed in brain, heart and kidney. Isoform 5 is dominantly expressed in liver, heart and kidney. Isoform 6 is expressed in neurons.

Its subcellular location is the cytoplasm. The protein localises to the cytosol. The protein resides in the golgi apparatus. It is found in the endomembrane system. It localises to the mitochondrion outer membrane. Its subcellular location is the peroxisome. The protein localises to the membrane. The protein resides in the clathrin-coated pit. It is found in the cytoplasmic vesicle. It localises to the secretory vesicle. Its subcellular location is the synaptic vesicle membrane. The catalysed reaction is GTP + H2O = GDP + phosphate + H(+). GTPase activity is increased by binding to phospholipid membranes. Functionally, functions in mitochondrial and peroxisomal division. Mediates membrane fission through oligomerization into membrane-associated tubular structures that wrap around the scission site to constrict and sever the mitochondrial membrane through a GTP hydrolysis-dependent mechanism. The specific recruitment at scission sites is mediated by membrane receptors like MFF, MIEF1 and MIEF2 for mitochondrial membranes. While the recruitment by the membrane receptors is GTP-dependent, the following hydrolysis of GTP induces the dissociation from the receptors and allows DNM1L filaments to curl into closed rings that are probably sufficient to sever a double membrane. Acts downstream of PINK1 to promote mitochondrial fission in a PRKN-dependent manner. Plays an important role in mitochondrial fission during mitosis. Through its function in mitochondrial division, ensures the survival of at least some types of postmitotic neurons, including Purkinje cells, by suppressing oxidative damage. Required for normal brain development, including that of cerebellum. Facilitates developmentally regulated apoptosis during neural tube formation. Required for a normal rate of cytochrome c release and caspase activation during apoptosis; this requirement may depend upon the cell type and the physiological apoptotic cues. Required for formation of endocytic vesicles. Proposed to regulate synaptic vesicle membrane dynamics through association with BCL2L1 isoform Bcl-X(L) which stimulates its GTPase activity in synaptic vesicles; the function may require its recruitment by MFF to clathrin-containing vesicles. Required for programmed necrosis execution. Rhythmic control of its activity following phosphorylation at Ser-637 is essential for the circadian control of mitochondrial ATP production. Inhibits peroxisomal division when overexpressed. This chain is Dynamin-1-like protein, found in Homo sapiens (Human).